The primary structure comprises 886 residues: Isoleucine--tRNA ligase (886 aa).

Residues 60–70 carry the 'HIGH' region motif; that stretch reads PYANGDIHIGH. Glu546 is a binding site for L-isoleucyl-5'-AMP. The short motif at 587 to 591 is the 'KMSKS' region element; it reads KMSKS. ATP is bound at residue Lys590. Cys856, Cys859, Cys870, and Cys873 together coordinate Zn(2+).

It belongs to the class-I aminoacyl-tRNA synthetase family. IleS type 1 subfamily. Monomer. Zn(2+) is required as a cofactor.

The protein localises to the cytoplasm. It carries out the reaction tRNA(Ile) + L-isoleucine + ATP = L-isoleucyl-tRNA(Ile) + AMP + diphosphate. Functionally, catalyzes the attachment of isoleucine to tRNA(Ile). As IleRS can inadvertently accommodate and process structurally similar amino acids such as valine, to avoid such errors it has two additional distinct tRNA(Ile)-dependent editing activities. One activity is designated as 'pretransfer' editing and involves the hydrolysis of activated Val-AMP. The other activity is designated 'posttransfer' editing and involves deacylation of mischarged Val-tRNA(Ile). This chain is Isoleucine--tRNA ligase, found in Mesomycoplasma hyopneumoniae (strain 232) (Mycoplasma hyopneumoniae).